We begin with the raw amino-acid sequence, 701 residues long: Rab-like protein 6 (701 aa).

The residue at position 1 (methionine 1) is an N-acetylmethionine. The segment at 39 to 279 (GVQYNMKIVI…IFLEMMEARS (241 aa)) is small GTPase-like. Residues 50–57 (GDRNTGKT), 100–104 (DVVDK), and 177–179 (YRD) each bind GTP. The disordered stretch occupies residues 279 to 701 (SRGHASPLTT…LRGGGDYEAL (423 aa)). A compositionally biased stretch (low complexity) spans 284–315 (SPLTTSGQSPSSGSQSPVVPPSTVSTGSSSPS). Residues 316–344 (TPQPVLQPPLQAPPAPPAPAEAPPLPAAP) show a composition bias toward pro residues. 5 positions are modified to phosphoserine: serine 394, serine 416, serine 418, serine 461, and serine 462. Over residues 495–506 (ALGPPRDAAPRA) the composition is skewed to low complexity. Residue serine 552 is modified to Phosphoserine. A compositionally biased stretch (basic and acidic residues) spans 555–569 (DAQRRAGEFPVREDL). Serine 570 carries the post-translational modification Phosphoserine. A Phosphothreonine modification is found at threonine 573. The span at 580–589 (VQPPAPPKPL) shows a compositional bias: pro residues. Residues 608–626 (EPGREDSSEQDKEGRPPAK) show a composition bias toward basic and acidic residues. Phosphoserine is present on residues serine 614 and serine 615. An interaction with CDKN2A region spans residues 629 to 667 (KKKKKKGREEEDKAAKKRSKHKKSRERADDKGRDERRRR). Basic residues predominate over residues 643-653 (AKKRSKHKKSR). The segment covering 654–665 (ERADDKGRDERR) has biased composition (basic and acidic residues). The segment covering 683-701 (LGGGAPSGPLRGGGDYEAL) has biased composition (gly residues).

Belongs to the small GTPase superfamily. Rab family.

The protein resides in the nucleus. The protein localises to the cytoplasm. Its function is as follows. May enhance cellular proliferation. May reduce growth inhibitory activity of CDKN2A. The chain is Rab-like protein 6 (RABL6) from Bos taurus (Bovine).